Here is a 906-residue protein sequence, read N- to C-terminus: MEESPPKQKSNTKVAQHEGQQDLNTTRHMNVELKHRPKLERHLKLGMIPVVYMKQREEILYPAQSLKEENLIQNFTSLPLLQKLCPKDPENMVRKSWASCIPEEGGHMINIQDLFGPNIGTQKEPQLVIIEGAAGIGKSTLARLVKRAWKEGQLYRDHFQHVFFFSCRELAQCKKLSLAELIAQGQEVPTAPINQILSHPEKLLFILDGIDEPAWVLADQNPELCLHWSQRQPVHTLLGSLLGKSILPEAFFLLTTRTTALQKFIPSLPMPCQVEVLGFSGIEWENYFYKYFANQRHAITAFMMVESNPVLLTLCEVPWVCWLVCTCLKKQMKQGRVLSLKSQTTTALCLKYLSLTIPDKHRRTQVKALCSLAAEGIWKRRTLFSESDLCKQGLDEDAVATFLKTGVLQKQASSLSYSFAHLCLQEFFAAISCILEDSEERHGNMEMDRIVETLVERYGRQNLFEAPTVRFLFGLLGKEGVKGMEKLFSCSLPGKTKLKLLWHILGKSQPHQPPCLGLLHCLYENQDMELLTHVMHDLQGTIVPGPNDIAHTVLQTNVKQLVVQTDMELMVATFCIQFYCHVRTLQLNMEKQQGYALTSPRMVLYRWTPITNASWEILFYNLKFTRNLEGLDLSGNSLRYSVVQSLCNTLRYPGCQLKTLWLVKCGLTSRYCSLLASVLSAHSSLTELYLQLNDLGDDGVRMLCEGLRNPVCNLSILWLDLSSLSAQVITELRTLEEKNPKLYIRSIWMPHMMVPTENMDEEAILTTFKQQRQESGDKPMEILGTEEDFWGPTGPVATELVDRVRNLYRVQLPMAGSYHCPSTGLHFVVTRAVTIEIEFCAWSQFLDKTPLQQSHMVVGPLFDIKAEQGAVTAVYLPHFVSLKDTEASTFDFKVTHFQEHGSRNAR.

The interval 1–22 (MEESPPKQKSNTKVAQHEGQQD) is disordered. The region spanning 126-435 (QLVIIEGAAG…EFFAAISCIL (310 aa)) is the NACHT domain. 132–139 (GAAGIGKS) is a binding site for ATP. LRR repeat units lie at residues 627 to 647 (NLEG…QSLC) and 684 to 704 (SLTE…RMLC). Residues 789 to 906 (FWGPTGPVAT…FQEHGSRNAR (118 aa)) form the FIIND (incomplete) domain.

This sequence belongs to the NLRP family. In terms of tissue distribution, expressed in macrophages.

It is found in the cytoplasm. The protein localises to the cytosol. Functionally, probable inactive allele of Nlrp1b, which lacks a CARD domain, suggesting that it is not able to form an inflammasome. Contrary to Nlrp1b allele 1, allele 4 is not activated by B.anthracis lethal toxin and no other activation signal is reported. In Mus musculus (Mouse), this protein is NACHT, LRR and PYD domains-containing protein 1b allele 4.